A 420-amino-acid polypeptide reads, in one-letter code: Homeobox-containing protein 1 (420 aa).

The HNF-p1 domain maps to 18–49 (DEPRFTIEQIDLLQRLRRTGMTKHEILHALET). The interval 56–139 (EHSDKFGRRS…GKMSPTRYHA (84 aa)) is disordered. A Glycyl lysine isopeptide (Lys-Gly) (interchain with G-Cter in SUMO2) cross-link involves residue K60. Composition is skewed to low complexity over residues 64 to 73 (RSSYGGSSYG) and 81 to 93 (ASSSTATASTQTQ). Positions 94–132 (HSGMSPSPSNSYDTSPQPCTTNQNGRENNERLSTSNGKM) are enriched in polar residues. K131 is covalently cross-linked (Glycyl lysine isopeptide (Lys-Gly) (interchain with G-Cter in SUMO2)). One can recognise a POU-specific atypical domain in the interval 145–241 (RSYSFEASEE…PGATLSMRPA (97 aa)). S148 carries the post-translational modification Phosphoserine. K161 is covalently cross-linked (Glycyl lysine isopeptide (Lys-Gly) (interchain with G-Cter in SUMO2)). S170 carries the post-translational modification Phosphoserine. Glycyl lysine isopeptide (Lys-Gly) (interchain with G-Cter in SUMO2) cross-links involve residues K174, K217, and K310. The segment at residues 267 to 341 (RRGSRFTWRK…NRRKEIKRRA (75 aa)) is a DNA-binding region (homeobox). Residues 353–385 (IDVQSPGGHSNSDDVDGNDYSEQDDSTSHSDHQ) are disordered. A compositionally biased stretch (acidic residues) spans 365–377 (DDVDGNDYSEQDD). A Glycyl lysine isopeptide (Lys-Gly) (interchain with G-Cter in SUMO1); alternate cross-link involves residue K413. A Glycyl lysine isopeptide (Lys-Gly) (interchain with G-Cter in SUMO2); alternate cross-link involves residue K413.

As to quaternary structure, associates with the telomerase holoenzyme complex. Interacts with DKC1, XRCC6 and COIL. In terms of tissue distribution, ubiquitous. Detected in pancreas, brain, spleen, placenta, prostate, thymus, liver, heart, bone marrow, skeletal muscle, stomach, uterus, testis, kidney, ovary, colon, lung, cardiac muscle and thyroid gland.

The protein localises to the nucleus. Its subcellular location is the cytoplasm. It is found in the chromosome. It localises to the telomere. The protein resides in the cajal body. The protein localises to the PML body. Its function is as follows. Binds directly to 5'-TTAGGG-3' repeats in telomeric DNA. Associates with the telomerase complex at sites of active telomere processing and positively regulates telomere elongation. Important for TERT binding to chromatin, indicating a role in recruitment of the telomerase complex to telomeres. Also plays a role in the alternative lengthening of telomeres (ALT) pathway in telomerase-negative cells where it promotes formation and/or maintenance of ALT-associated promyelocytic leukemia bodies (APBs). Enhances formation of telomere C-circles in ALT cells, suggesting a possible role in telomere recombination. Might also be involved in the DNA damage response at telomeres. The polypeptide is Homeobox-containing protein 1 (Homo sapiens (Human)).